The sequence spans 298 residues: Beta-soluble NSF attachment protein (298 aa).

The protein belongs to the SNAP family. Interacts with PRKCABP, and disrupts the interaction between GRIA2 and PRKCABP, leading to the internalization of GRIA2.

It localises to the membrane. In terms of biological role, required for vesicular transport between the endoplasmic reticulum and the Golgi apparatus. The chain is Beta-soluble NSF attachment protein (NAPB) from Homo sapiens (Human).